The chain runs to 848 residues: Neuroligin-3 (848 aa).

The first 37 residues, 1–37 (MWLRLGPPSLSLSPKPTVGRSLCLTLWFLSLALRAST), serve as a signal peptide directing secretion. The Extracellular portion of the chain corresponds to 38 to 709 (QAPAPTVNTH…NPRDYSTELS (672 aa)). Asn98 is a glycosylation site (N-linked (GlcNAc...) asparagine). An intrachain disulfide couples Cys106 to Cys141. Positions 170–195 (RKGGSGAKKQGEDLADNDGDEDEDIR) are disordered. Residues 182 to 194 (DLADNDGDEDEDI) are compositionally biased toward acidic residues. Disulfide bonds link Cys340–Cys351 and Cys510–Cys544. N-linked (GlcNAc...) asparagine glycosylation is present at Asn545. Polar residues-rich tracts occupy residues 645-656 (TKVPPPDTTHSS) and 677-689 (AYSN…SWNG). Residues 645–694 (TKVPPPDTTHSSHITRRPNGKTWSTKRPAISPAYSNENAQGSWNGDQDAG) form a disordered region. A helical membrane pass occupies residues 710 to 730 (VTIAVGASLLFLNVLAFAALY). The Cytoplasmic segment spans residues 731–848 (YRKDKRRQEP…LPHSHSTTRV (118 aa)). Position 745 is a phosphoserine (Ser745). At Tyr792 the chain carries Phosphotyrosine.

Belongs to the type-B carboxylesterase/lipase family. Homodimer, and heterodimer with NLGN1 and NLGN2. Interacts with neurexins NRXN1, NRXN2 and NRXN3. Interaction with neurexins is mediated by heparan sulfate glycan modification on neurexin. Interacts (via its C-terminus) with DLG4/PSD-95 (via PDZ domain 3). Expressed in the blood vessel walls (at protein level). Detected in throughout the brain and in spinal cord. Detected in brain, and at lower levels in pancreas islet beta cells.

Its subcellular location is the cell membrane. It localises to the synapse. Functionally, cell surface protein involved in cell-cell-interactions via its interactions with neurexin family members. Plays a role in synapse function and synaptic signal transmission, and may mediate its effects by clustering other synaptic proteins. May promote the initial formation of synapses, but is not essential for this. May also play a role in glia-glia or glia-neuron interactions in the developing peripheral nervous system. This is Neuroligin-3 (NLGN3) from Homo sapiens (Human).